A 300-amino-acid chain; its full sequence is Cytochrome f (300 aa).

A signal peptide spans 1–32; that stretch reads MMTYLSKQFSKLLFGQLLFLFIGNLLLKPVQA. Heme-binding residues include Tyr33, Cys53, Cys56, and His57. Residues 267-287 traverse the membrane as a helical segment; it reads LKTFIAFCVTVFIGQLAFVLK.

This sequence belongs to the cytochrome f family. The 4 large subunits of the cytochrome b6-f complex are cytochrome b6, subunit IV (17 kDa polypeptide, petD), cytochrome f and the Rieske protein, while the 4 small subunits are PetG, PetL, PetM and PetN. The complex functions as a dimer. It depends on heme as a cofactor.

Its subcellular location is the plastid. The protein resides in the chloroplast thylakoid membrane. Its function is as follows. Component of the cytochrome b6-f complex, which mediates electron transfer between photosystem II (PSII) and photosystem I (PSI), cyclic electron flow around PSI, and state transitions. This is Cytochrome f from Cyanidioschyzon merolae (strain NIES-3377 / 10D) (Unicellular red alga).